The primary structure comprises 367 residues: Inactive serine protease 39 (367 aa).

Positions 1–31 (MWGSRAQQSGPDRGGACLLAAFLLCFSLLHA) are cleaved as a signal peptide. A Peptidase S1 domain is found at 68 to 312 (IYGGQIAKAE…FSDWIKQKKA (245 aa)). Cystine bridges form between Cys93–Cys109, Cys192–Cys269, Cys225–Cys248, and Cys259–Cys287.

This sequence belongs to the peptidase S1 family. Expressed in testis. More specifically, abundantly expressed in the haploid round spermatid.

The protein localises to the cytoplasmic vesicle. It is found in the secretory vesicle. Its subcellular location is the acrosome. The protein resides in the secreted. In terms of biological role, may play an important role in the sperm/egg interaction; released during the acrosome reaction. This is Inactive serine protease 39 (Prss39) from Mus musculus (Mouse).